The following is a 529-amino-acid chain: T-complex protein 1 subunit delta (529 aa).

The protein belongs to the TCP-1 chaperonin family. Heterooligomeric complex of about 850 to 900 kDa that forms two stacked rings, 12 to 16 nm in diameter.

Its subcellular location is the cytoplasm. Molecular chaperone; assists the folding of proteins upon ATP hydrolysis. Known to play a role, in vitro, in the folding of actin and tubulin. This Candida glabrata (strain ATCC 2001 / BCRC 20586 / JCM 3761 / NBRC 0622 / NRRL Y-65 / CBS 138) (Yeast) protein is T-complex protein 1 subunit delta (CCT4).